A 591-amino-acid polypeptide reads, in one-letter code: V-type ATP synthase alpha chain (591 aa).

233–240 contributes to the ATP binding site; it reads GPFGAGKT.

Belongs to the ATPase alpha/beta chains family.

The enzyme catalyses ATP + H2O + 4 H(+)(in) = ADP + phosphate + 5 H(+)(out). Produces ATP from ADP in the presence of a proton gradient across the membrane. The V-type alpha chain is a catalytic subunit. The sequence is that of V-type ATP synthase alpha chain from Streptococcus pneumoniae serotype 19F (strain G54).